A 247-amino-acid polypeptide reads, in one-letter code: 5-hydroxytryptamine receptor 2A (247 aa).

A topological domain (extracellular) is located at residue Lys-1. A helical transmembrane segment spans residues Leu-2–Leu-26. Cysteines 3 and 82 form a disulfide. A serotonin-binding site is contributed by Asp-10. The DRY motif; important for ligand-induced conformation changes signature appears at Asp-27–Tyr-29. At Asp-27–Lys-46 the chain is on the cytoplasmic side. Residues Ala-47–Leu-70 form a helical membrane-spanning segment. Over Gln-71 to Asp-87 the chain is Extracellular. A helical membrane pass occupies residues Asn-88–Ile-113. Topologically, residues Lys-114–Cys-177 are cytoplasmic. Ser-135 bears the Phosphoserine mark. Residues Lys-178–Ile-203 traverse the membrane as a helical segment. Asn-198 lines the serotonin pocket. Cys-204 and Cys-208 are joined by a disulfide. Residues Cys-204–Asp-211 lie on the Extracellular side of the membrane. Residues Val-212–Leu-237 form a helical membrane-spanning segment. Positions Asn-231–Tyr-235 match the NPxxY motif; important for ligand-induced conformation changes and signaling motif. Residues Phe-238–Ala-247 are Cytoplasmic-facing.

This sequence belongs to the G-protein coupled receptor 1 family. Interacts (via C-terminus) with MPDZ and PATJ. May interact (via C-terminus) with MPP3, PRDX6, DLG4, DLG1, CASK, APBA1 and MAGI2. Interacts with GRM2 and DRD2; this may affect signaling. Detected in adult intestine, especially in mucosal epithelium, longitudinal and circular layers of muscularis externa and myenteric plexuses. Highly expressed in Paneth cells, and detected at lower levels in enterocytes (at protein level).

It is found in the cell membrane. The protein resides in the cell projection. The protein localises to the dendrite. Its subcellular location is the axon. It localises to the cytoplasmic vesicle. It is found in the membrane. The protein resides in the caveola. The protein localises to the presynapse. G-protein coupled receptor activity is regulated by lipids: oleamide increases HTR2A-mediated activity. In terms of biological role, G-protein coupled receptor for 5-hydroxytryptamine (serotonin). Also functions as a receptor for various drugs and psychoactive substances, including mescaline, psilocybin, 1-(2,5-dimethoxy-4-iodophenyl)-2-aminopropane (DOI) and lysergic acid diethylamide (LSD). Ligand binding causes a conformation change that triggers signaling via guanine nucleotide-binding proteins (G proteins) and modulates the activity of downstream effectors. HTR2A is coupled to G(q)/G(11) G alpha proteins and activates phospholipase C-beta, releasing diacylglycerol (DAG) and inositol 1,4,5-trisphosphate (IP3) second messengers that modulate the activity of phosphatidylinositol 3-kinase and promote the release of Ca(2+) ions from intracellular stores, respectively. Beta-arrestin family members inhibit signaling via G proteins and mediate activation of alternative signaling pathways. Affects neural activity, perception, cognition and mood. Plays a role in the regulation of behavior, including responses to anxiogenic situations and psychoactive substances. Plays a role in intestinal smooth muscle contraction, and may play a role in arterial vasoconstriction. The sequence is that of 5-hydroxytryptamine receptor 2A (HTR2A) from Cavia porcellus (Guinea pig).